Reading from the N-terminus, the 113-residue chain is Iron-sulfur cluster insertion protein ErpA (113 aa).

Residues Cys41, Cys105, and Cys107 each contribute to the iron-sulfur cluster site.

Belongs to the HesB/IscA family. In terms of assembly, homodimer. The cofactor is iron-sulfur cluster.

Functionally, required for insertion of 4Fe-4S clusters for at least IspG. In Histophilus somni (strain 2336) (Haemophilus somnus), this protein is Iron-sulfur cluster insertion protein ErpA.